Consider the following 741-residue polypeptide: Hemolysin (741 aa).

Positions 1-25 (MPKLNRCAIAIFTILSAISSPTLLA) are cleaved as a signal peptide. Residues 26-157 (NINEPSGEAA…RSGFASPAPA (132 aa)) constitute a propeptide that is removed on maturation. 3 cysteine pairs are disulfide-bonded: C182–C200, C497–C511, and C537–C549. The Ricin B-type lectin domain occupies 484 to 575 (RPVNLQLASF…LTNVYSGESL (92 aa)). The interval 607-741 (NAQESSPILG…LVKGVQFDLN (135 aa)) is beta-prism domain.

Belongs to the HlyA hemolysin family. As to quaternary structure, monomer. Homoheptamer. After binding to target membranes the protein assembles into a heptameric pre-pore complex. Proteolytic cleavage triggers a conformation change that is required for membrane insertion and pore formation. Proteolytical cleavage is required to convert the 80 kDa hemolysin precursor into the active 65 kDa hemolysin.

Its subcellular location is the secreted. It is found in the host cell membrane. In terms of biological role, bacterial hemolysin that causes cytolysis by forming heptameric pores in target host membranes. This Vibrio cholerae serotype O1 (strain ATCC 39315 / El Tor Inaba N16961) protein is Hemolysin (hlyA).